A 61-amino-acid chain; its full sequence is Bacteriocin leucocin-B (61 aa).

Residues 1 to 24 constitute a propeptide that is removed on maturation; the sequence is MNNMKSADNYQQLDNNALEQVVGG. Cysteines 33 and 38 form a disulfide.

The protein belongs to the bacteriocin class IIA/YGNGV family.

Its subcellular location is the secreted. Its function is as follows. Active against L.monocytogenes and several lactic acid bacteria. The chain is Bacteriocin leucocin-B from Leuconostoc carnosum.